Reading from the N-terminus, the 142-residue chain is Hemoglobin subunit alpha (142 aa).

The 141-residue stretch at 2–142 (VLSAADKTNV…VSTVLTSKYR (141 aa)) folds into the Globin domain. Residue S4 is modified to Phosphoserine. Position 8 is an N6-succinyllysine (K8). The residue at position 9 (T9) is a Phosphothreonine. K12 carries the N6-succinyllysine modification. K17 bears the N6-acetyllysine; alternate mark. Position 17 is an N6-succinyllysine; alternate (K17). An N6-succinyllysine modification is found at K41. S50 carries the post-translational modification Phosphoserine. H59 serves as a coordination point for O2. Residue H88 coordinates heme b. The residue at position 103 (S103) is a Phosphoserine. At T109 the chain carries Phosphothreonine. Phosphoserine occurs at positions 125 and 132. T135 and T138 each carry phosphothreonine. Position 139 is a phosphoserine (S139).

This sequence belongs to the globin family. As to quaternary structure, heterotetramer of two alpha chains and two beta chains. As to expression, red blood cells.

Its function is as follows. Involved in oxygen transport from the lung to the various peripheral tissues. Functionally, hemopressin acts as an antagonist peptide of the cannabinoid receptor CNR1. Hemopressin-binding efficiently blocks cannabinoid receptor CNR1 and subsequent signaling. The chain is Hemoglobin subunit alpha (HBA) from Equus przewalskii (Przewalski's horse).